Here is a 68-residue protein sequence, read N- to C-terminus: Large ribosomal subunit protein uL29 (68 aa).

The protein belongs to the universal ribosomal protein uL29 family.

In Maricaulis maris (strain MCS10) (Caulobacter maris), this protein is Large ribosomal subunit protein uL29.